Here is a 130-residue protein sequence, read N- to C-terminus: uncharacterized protein (130 aa).

The segment at 76–102 is disordered; it reads RKCKNGPSPNKRGSASGCSRRGGGRGS.

This is an uncharacterized protein from Saccharomyces cerevisiae (strain ATCC 204508 / S288c) (Baker's yeast).